Consider the following 850-residue polypeptide: Receptor-like protein kinase ANXUR1 (850 aa).

The N-terminal stretch at 1–26 (MSGKTRILFFLTCLSFLLVFPTRSNG) is a signal peptide. Over 27 to 429 (QDLALSCGTS…KKEFKNEKRH (403 aa)) the chain is Extracellular. Asparagine 114, asparagine 132, asparagine 292, asparagine 302, and asparagine 330 each carry an N-linked (GlcNAc...) asparagine glycan. The chain crosses the membrane as a helical span at residues 430–450 (AFIIGSAGGVLAVLIGALCFT). Topologically, residues 451–850 (AYKKKQGYQG…FSQIVNPKGR (400 aa)) are cytoplasmic. The Protein kinase domain maps to 517–790 (FDDSNVIGVG…GDVLWNLEFA (274 aa)). ATP is bound by residues 523 to 531 (IGVGGFGKV) and lysine 545. Aspartate 641 functions as the Proton acceptor in the catalytic mechanism. The disordered stretch occupies residues 796–850 (TADGTRHRTPNNGGSSEDLGRGGMAVNVAGRDDVSDLSSEDNTEIFSQIVNPKGR). A compositionally biased stretch (polar residues) spans 839–850 (EIFSQIVNPKGR).

It belongs to the protein kinase superfamily. Ser/Thr protein kinase family. In terms of tissue distribution, expressed in pollen, but not in pistils or seedlings.

The protein resides in the cell membrane. The catalysed reaction is L-seryl-[protein] + ATP = O-phospho-L-seryl-[protein] + ADP + H(+). It catalyses the reaction L-threonyl-[protein] + ATP = O-phospho-L-threonyl-[protein] + ADP + H(+). Its function is as follows. Receptor-like protein kinase that controls pollen tube behavior by directing rupture at proper timing to release the sperm cell. In Arabidopsis thaliana (Mouse-ear cress), this protein is Receptor-like protein kinase ANXUR1 (ANX1).